The chain runs to 505 residues: Histidine ammonia-lyase (505 aa).

Positions 141 to 143 (ASG) form a cross-link, 5-imidazolinone (Ala-Gly). Position 142 is a 2,3-didehydroalanine (Ser) (Ser-142).

Belongs to the PAL/histidase family. Post-translationally, contains an active site 4-methylidene-imidazol-5-one (MIO), which is formed autocatalytically by cyclization and dehydration of residues Ala-Ser-Gly.

It is found in the cytoplasm. It carries out the reaction L-histidine = trans-urocanate + NH4(+). It functions in the pathway amino-acid degradation; L-histidine degradation into L-glutamate; N-formimidoyl-L-glutamate from L-histidine: step 1/3. This Bacillus cytotoxicus (strain DSM 22905 / CIP 110041 / 391-98 / NVH 391-98) protein is Histidine ammonia-lyase.